Consider the following 184-residue polypeptide: HVA22-like protein c (184 aa).

The next 3 helical transmembrane spans lie at 13–33, 51–71, and 73–93; these read VLIK…YPLY, LTYW…SKPL, and WFPI…LPQF.

This sequence belongs to the DP1 family. As to expression, predominantly expressed in flower buds and stem.

The protein resides in the membrane. The polypeptide is HVA22-like protein c (HVA22C) (Arabidopsis thaliana (Mouse-ear cress)).